A 578-amino-acid polypeptide reads, in one-letter code: Telomere repeat-binding protein 1 (578 aa).

The 80-residue stretch at 293 to 372 (VKLRIKSFRV…HLDSLDFSLE (80 aa)) folds into the Ubiquitin-like domain. Positions 440 to 467 (ELSSQSQPPSRKSRRSEQQQQQAAQRRI) are disordered. The 60-residue stretch at 463–522 (AQRRIRRPFSVAEVEALVQAVEKLGTGRWRDVKLCAFEDADHRTYVDLKDKWKTLVHTAK) folds into the HTH myb-type domain. Interaction with DNA stretches follow at residues 465–469 (RRIRR), 511–515 (KDKWK), and 522–529 (KISPQQRR). A DNA-binding region (H-T-H motif) is located at residues 491 to 518 (WRDVKLCAFEDADHRTYVDLKDKWKTLV).

Homodimer and heterodimer with TRP2 and TRP3. Interacts with KU70. As to expression, expressed ubiquitously. Highest expression in flowers and leaves.

Its subcellular location is the nucleus. Its function is as follows. Binds specifically to the plant telomeric double-stranded DNA sequences 5'-GGTTTAG-3'. At least 4 repeats of telomeric sequences are required for binding. Induces DNA bending. This chain is Telomere repeat-binding protein 1 (TRP1), found in Arabidopsis thaliana (Mouse-ear cress).